The primary structure comprises 88 residues: Small ribosomal subunit protein uS15 (88 aa).

This sequence belongs to the universal ribosomal protein uS15 family. Part of the 30S ribosomal subunit. Forms a bridge to the 50S subunit in the 70S ribosome, contacting the 23S rRNA.

Functionally, one of the primary rRNA binding proteins, it binds directly to 16S rRNA where it helps nucleate assembly of the platform of the 30S subunit by binding and bridging several RNA helices of the 16S rRNA. Its function is as follows. Forms an intersubunit bridge (bridge B4) with the 23S rRNA of the 50S subunit in the ribosome. The polypeptide is Small ribosomal subunit protein uS15 (Desulfitobacterium hafniense (strain Y51)).